The following is a 247-amino-acid chain: ATP synthase subunit a (247 aa).

6 consecutive transmembrane segments (helical) span residues 24-44, 82-102, 112-132, 141-161, 194-214, and 219-239; these read IAFTNSSAYMFLAVALTSLLM, FFPFVFSIFMLVTVSNLVGII, IIVTAALAFLVFFTVLIYGFY, LFVPSGIPVVILPLVVTIEVI, MLGAMGIVGVFGAVLPLALVV, and LELLVAFLQAYVFTILTCIYI.

Belongs to the ATPase A chain family. As to quaternary structure, F-type ATPases have 2 components, CF(1) - the catalytic core - and CF(0) - the membrane proton channel. CF(1) has five subunits: alpha(3), beta(3), gamma(1), delta(1), epsilon(1). CF(0) has three main subunits: a(1), b(2) and c(9-12). The alpha and beta chains form an alternating ring which encloses part of the gamma chain. CF(1) is attached to CF(0) by a central stalk formed by the gamma and epsilon chains, while a peripheral stalk is formed by the delta and b chains.

The protein localises to the cell inner membrane. In terms of biological role, key component of the proton channel; it plays a direct role in the translocation of protons across the membrane. This Nitrobacter winogradskyi (strain ATCC 25391 / DSM 10237 / CIP 104748 / NCIMB 11846 / Nb-255) protein is ATP synthase subunit a.